Consider the following 208-residue polypeptide: Putative 3-methyladenine DNA glycosylase (208 aa).

The protein belongs to the DNA glycosylase MPG family.

This chain is Putative 3-methyladenine DNA glycosylase, found in Nitrobacter winogradskyi (strain ATCC 25391 / DSM 10237 / CIP 104748 / NCIMB 11846 / Nb-255).